We begin with the raw amino-acid sequence, 426 residues long: Glutamyl-tRNA reductase (426 aa).

Residues 49-52, serine 101, 106-108, and glutamine 112 each bind substrate; these read TCNR and EPQ. Residue cysteine 50 is the Nucleophile of the active site. 181–186 contributes to the NADP(+) binding site; the sequence is GAGETI. Residues 404-426 are disordered; sequence DRLFPEKPGLPTSPHSYPDREDR.

The protein belongs to the glutamyl-tRNA reductase family. Homodimer.

The catalysed reaction is (S)-4-amino-5-oxopentanoate + tRNA(Glu) + NADP(+) = L-glutamyl-tRNA(Glu) + NADPH + H(+). It functions in the pathway porphyrin-containing compound metabolism; protoporphyrin-IX biosynthesis; 5-aminolevulinate from L-glutamyl-tRNA(Glu): step 1/2. Functionally, catalyzes the NADPH-dependent reduction of glutamyl-tRNA(Glu) to glutamate 1-semialdehyde (GSA). The protein is Glutamyl-tRNA reductase of Xanthomonas campestris pv. phaseoli.